A 152-amino-acid chain; its full sequence is Ribosomal RNA large subunit methyltransferase H (152 aa).

Residues Leu-71, Gly-101, and 120-125 (LSKLTF) each bind S-adenosyl-L-methionine.

It belongs to the RNA methyltransferase RlmH family. As to quaternary structure, homodimer.

The protein resides in the cytoplasm. The catalysed reaction is pseudouridine(1915) in 23S rRNA + S-adenosyl-L-methionine = N(3)-methylpseudouridine(1915) in 23S rRNA + S-adenosyl-L-homocysteine + H(+). Specifically methylates the pseudouridine at position 1915 (m3Psi1915) in 23S rRNA. The chain is Ribosomal RNA large subunit methyltransferase H from Thermosipho melanesiensis (strain DSM 12029 / CIP 104789 / BI429).